Consider the following 193-residue polypeptide: Ion-translocating oxidoreductase complex subunit A (193 aa).

The next 6 membrane-spanning stretches (helical) occupy residues 5 to 25, 39 to 59, 62 to 82, 102 to 122, 134 to 154, and 171 to 191; these read LLLF…FLGL, IGMG…AWMV, FILL…LVIA, LLGI…VALL, AVYG…FAAI, and SIAL…TGLV.

This sequence belongs to the NqrDE/RnfAE family. In terms of assembly, the complex is composed of six subunits: RnfA, RnfB, RnfC, RnfD, RnfE and RnfG.

The protein resides in the cell inner membrane. Functionally, part of a membrane-bound complex that couples electron transfer with translocation of ions across the membrane. The sequence is that of Ion-translocating oxidoreductase complex subunit A from Yersinia pestis (strain Pestoides F).